The following is a 438-amino-acid chain: Putative galacturan 1,4-alpha-galacturonidase A (438 aa).

The signal sequence occupies residues 1 to 21 (MRMPSAISIGVFAGLSLAASA). N-linked (GlcNAc...) asparagine glycans are attached at residues asparagine 28, asparagine 102, asparagine 111, and asparagine 197. PbH1 repeat units lie at residues 186 to 222 (SSHINLDNFYVNATNHDSSVSPEGEWVQNTDGIDTYR) and 223 to 244 (SDHITITNWVYQGGDDAVAFKG). The Proton donor role is filled by aspartate 237. 7 N-linked (GlcNAc...) asparagine glycosylation sites follow: asparagine 245, asparagine 253, asparagine 279, asparagine 325, asparagine 353, asparagine 372, and asparagine 388. PbH1 repeat units follow at residues 246–266 (STNIHVENVTVYGGPGIAFGS), 277–303 (VENVTVRNVRVQPSFQRAMNSGVYFKS), and 323–344 (VRNVSVENLRLKDVQLPVYIDT). An intrachain disulfide couples cysteine 397 to cysteine 403. N-linked (GlcNAc...) asparagine glycosylation occurs at asparagine 418.

Belongs to the glycosyl hydrolase 28 family.

The protein resides in the secreted. It carries out the reaction [(1-&gt;4)-alpha-D-galacturonosyl](n) + H2O = alpha-D-galacturonate + [(1-&gt;4)-alpha-D-galacturonosyl](n-1). Its function is as follows. Specific in hydrolyzing the terminal glycosidic bond of polygalacturonic acid and oligogalacturonates. The polypeptide is Putative galacturan 1,4-alpha-galacturonidase A (rgxA) (Aspergillus niger).